The chain runs to 585 residues: ATP-dependent lipid A-core flippase (585 aa).

Helical transmembrane passes span 24-44 (LWKV…ASAA), 65-85 (LLVP…SFCG), 143-163 (ITVV…MIYV), 165-185 (WKLT…IGYV), and 253-273 (PIIQ…ALSP). An ABC transmembrane type-1 domain is found at 29-310 (ALAVLGNVIY…LTEVNAVIQR (282 aa)). Residues 342 to 578 (LEFKSLGFAY…DGAYAALHKL (237 aa)) form the ABC transporter domain. 376-383 (GRSGSGKS) is an ATP binding site.

Belongs to the ABC transporter superfamily. Lipid exporter (TC 3.A.1.106) family. As to quaternary structure, homodimer.

The protein localises to the cell inner membrane. It carries out the reaction ATP + H2O + lipid A-core oligosaccharideSide 1 = ADP + phosphate + lipid A-core oligosaccharideSide 2.. Involved in lipopolysaccharide (LPS) biosynthesis. Translocates lipid A-core from the inner to the outer leaflet of the inner membrane. Transmembrane domains (TMD) form a pore in the inner membrane and the ATP-binding domain (NBD) is responsible for energy generation. The chain is ATP-dependent lipid A-core flippase from Hahella chejuensis (strain KCTC 2396).